The following is a 287-amino-acid chain: 4-hydroxybenzoate octaprenyltransferase (287 aa).

Helical transmembrane passes span 21-41 (VGIF…AKGA), 44-64 (FKIA…GCIV), 91-111 (VTEA…LVLL), 112-132 (LNRL…VYPF), 139-159 (LPQL…FAAT), 160-180 (VGHV…WPIV), 211-231 (LMIG…GWYL), 235-255 (YWFY…QFLI), and 263-283 (CFAA…GILL).

Belongs to the UbiA prenyltransferase family. Requires Mg(2+) as cofactor.

It localises to the cell inner membrane. It catalyses the reaction all-trans-octaprenyl diphosphate + 4-hydroxybenzoate = 4-hydroxy-3-(all-trans-octaprenyl)benzoate + diphosphate. Its pathway is cofactor biosynthesis; ubiquinone biosynthesis. Its function is as follows. Catalyzes the prenylation of para-hydroxybenzoate (PHB) with an all-trans polyprenyl group. Mediates the second step in the final reaction sequence of ubiquinone-8 (UQ-8) biosynthesis, which is the condensation of the polyisoprenoid side chain with PHB, generating the first membrane-bound Q intermediate 3-octaprenyl-4-hydroxybenzoate. This is 4-hydroxybenzoate octaprenyltransferase from Coxiella burnetii (strain CbuG_Q212) (Coxiella burnetii (strain Q212)).